The sequence spans 488 residues: Glutamate--tRNA ligase (488 aa).

The short motif at 8–18 (PSPTGPLHIGG) is the 'HIGH' region element. Positions 105, 107, 132, and 134 each coordinate Zn(2+). A 'KMSKS' region motif is present at residues 249–253 (KMSKR). Lysine 252 is an ATP binding site.

This sequence belongs to the class-I aminoacyl-tRNA synthetase family. Glutamate--tRNA ligase type 1 subfamily. In terms of assembly, monomer. The cofactor is Zn(2+).

It is found in the cytoplasm. It catalyses the reaction tRNA(Glu) + L-glutamate + ATP = L-glutamyl-tRNA(Glu) + AMP + diphosphate. In terms of biological role, catalyzes the attachment of glutamate to tRNA(Glu) in a two-step reaction: glutamate is first activated by ATP to form Glu-AMP and then transferred to the acceptor end of tRNA(Glu). This is Glutamate--tRNA ligase from Desulfitobacterium hafniense (strain Y51).